The following is an 878-amino-acid chain: von Willebrand factor A domain-containing protein DDB_G0267758 (878 aa).

A VIT domain is found at 36–169; the sequence is GLFLTENNKK…TVKITLTITS (134 aa). The VWFA domain maps to 316 to 496; it reads EFIFLIDCSG…ISLKPMFSNI (181 aa). The span at 595-623 shows a compositional bias: low complexity; the sequence is SSSSSSSSSSSSSSSSSSSSSSSSSSSSS. 2 disordered regions span residues 595-638 and 752-774; these read SSSS…HRLS and SVKK…SKTK. A compositionally biased stretch (polar residues) spans 624 to 635; the sequence is TTTATTNQNQIH.

In Dictyostelium discoideum (Social amoeba), this protein is von Willebrand factor A domain-containing protein DDB_G0267758.